A 156-amino-acid chain; its full sequence is MNDNQTVIDLDLQIAVEGFELPSQAELELWVKTALRDTMSEAELTIRIVDVEESQELNSTYRGKDKPTNVLSFPFEAPPGIELPLLGDLVICAAVVKQEAMDQNKPLIAHWAHMVVHGCLHLLGYDHIDDSEAEEMESLETHLIESLGYINPYKEQ.

His-117, His-121, and His-127 together coordinate Zn(2+).

The protein belongs to the endoribonuclease YbeY family. Zn(2+) is required as a cofactor.

The protein localises to the cytoplasm. Single strand-specific metallo-endoribonuclease involved in late-stage 70S ribosome quality control and in maturation of the 3' terminus of the 16S rRNA. The sequence is that of Endoribonuclease YbeY from Shewanella halifaxensis (strain HAW-EB4).